We begin with the raw amino-acid sequence, 138 residues long: Aspartate 1-decarboxylase (138 aa).

The Schiff-base intermediate with substrate; via pyruvic acid role is filled by S25. S25 is modified (pyruvic acid (Ser)). T57 lines the substrate pocket. The active-site Proton donor is the Y58. 73–75 is a binding site for substrate; sequence GAA.

This sequence belongs to the PanD family. Heterooctamer of four alpha and four beta subunits. It depends on pyruvate as a cofactor. Post-translationally, is synthesized initially as an inactive proenzyme, which is activated by self-cleavage at a specific serine bond to produce a beta-subunit with a hydroxyl group at its C-terminus and an alpha-subunit with a pyruvoyl group at its N-terminus.

It is found in the cytoplasm. The catalysed reaction is L-aspartate + H(+) = beta-alanine + CO2. It functions in the pathway cofactor biosynthesis; (R)-pantothenate biosynthesis; beta-alanine from L-aspartate: step 1/1. Functionally, catalyzes the pyruvoyl-dependent decarboxylation of aspartate to produce beta-alanine. This Renibacterium salmoninarum (strain ATCC 33209 / DSM 20767 / JCM 11484 / NBRC 15589 / NCIMB 2235) protein is Aspartate 1-decarboxylase.